Here is a 301-residue protein sequence, read N- to C-terminus: Cuticle collagen 1 (301 aa).

The N-terminal stretch at 1–37 is a signal peptide; the sequence is METDGRLKAYKFVAYAAVGFSIAAVASVLLTLPMVYS. The tract at residues 79-82 is furin-like endopeptidase recognition region; that stretch reads RTTR. Triple-helical region stretches follow at residues 105 to 134, 153 to 179, 183 to 209, and 218 to 283; these read GPPG…PGKP, GPPG…PGTD, GSPG…PGTP, and GAPG…KGIC. A disordered region spans residues 109–284; that stretch reads PAGAPGKPGK…GTPGEKGICP (176 aa). Pro residues-rich tracts occupy residues 131-164 and 184-193; these read PGKP…PGAP and SPGPRGPPGP. Positions 194–210 are enriched in low complexity; sequence AGEAGAPGPAGEPGTPA. Residues 226-258 show a composition bias toward pro residues; it reads SGPPGPPGPPGAPGNDGPPGPPGPKGAPGPDGP.

The protein belongs to the cuticular collagen family. As to quaternary structure, collagen polypeptide chains are complexed within the cuticle by disulfide bonds and other types of covalent cross-links.

The protein localises to the secreted. The protein resides in the extracellular space. In terms of biological role, secreted collagen that forms part of the nematode cuticle, which functions as an exoskeleton and a barrier to protect the worm from its environment. Secretion and subsequent incorporation into the cuticle is likely mediated by bli-4, which probably cleaves at the N-terminal consensus furin cleavage site. This is Cuticle collagen 1 (sqt-3) from Caenorhabditis elegans.